A 461-amino-acid chain; its full sequence is Photosynthetic NDH subunit of subcomplex B 1, chloroplastic (461 aa).

A chloroplast-targeting transit peptide spans 1 to 44 (MASSLPLLPKPISPFFKTPPFSTSKPLVFLNFQTRLTSRSSDVS). The disordered stretch occupies residues 66-90 (NEYGSLFADGKQDEDPRPPDNPDNP). A compositionally biased stretch (basic and acidic residues) spans 75–85 (GKQDEDPRPPD).

In terms of assembly, part of the chloroplast NDH complex, composed of a mixture of chloroplast and nucleus encoded subunits. Component of the NDH subcomplex B, at least composed of PnsB1, PnsB2, PnsB3, PnsB4 and PnsB5.

It is found in the plastid. The protein resides in the chloroplast thylakoid membrane. Its function is as follows. NDH shuttles electrons from NAD(P)H:plastoquinone, via FMN and iron-sulfur (Fe-S) centers, to quinones in the photosynthetic chain and possibly in a chloroplast respiratory chain. The immediate electron acceptor for the enzyme in this species is believed to be plastoquinone. Couples the redox reaction to proton translocation, and thus conserves the redox energy in a proton gradient. The polypeptide is Photosynthetic NDH subunit of subcomplex B 1, chloroplastic (Arabidopsis thaliana (Mouse-ear cress)).